Reading from the N-terminus, the 209-residue chain is Thymidylate kinase (209 aa).

Position 10–17 (10–17 (GIDGCGKS)) interacts with ATP.

The protein belongs to the thymidylate kinase family.

It catalyses the reaction dTMP + ATP = dTDP + ADP. Its function is as follows. Phosphorylation of dTMP to form dTDP in both de novo and salvage pathways of dTTP synthesis. The polypeptide is Thymidylate kinase (Parasynechococcus marenigrum (strain WH8102)).